A 95-amino-acid chain; its full sequence is DNA-directed RNA polymerase subunit Rpo11 (95 aa).

The protein belongs to the archaeal Rpo11/eukaryotic RPB11/RPC19 RNA polymerase subunit family. Part of the RNA polymerase complex.

The protein localises to the cytoplasm. It carries out the reaction RNA(n) + a ribonucleoside 5'-triphosphate = RNA(n+1) + diphosphate. In terms of biological role, DNA-dependent RNA polymerase (RNAP) catalyzes the transcription of DNA into RNA using the four ribonucleoside triphosphates as substrates. This chain is DNA-directed RNA polymerase subunit Rpo11, found in Methanococcus vannielii (strain ATCC 35089 / DSM 1224 / JCM 13029 / OCM 148 / SB).